Reading from the N-terminus, the 373-residue chain is Probable pectin lyase C (373 aa).

The N-terminal stretch at 1 to 18 (MKVPFLQLLCLNAALASA) is a signal peptide. Cystine bridges form between C81–C100 and C90–C220. An N-linked (GlcNAc...) asparagine glycan is attached at N123. Residue R250 is part of the active site. A disulfide bridge links C316 with C324.

Belongs to the polysaccharide lyase 1 family.

It localises to the secreted. The enzyme catalyses Eliminative cleavage of (1-&gt;4)-alpha-D-galacturonan methyl ester to give oligosaccharides with 4-deoxy-6-O-methyl-alpha-D-galact-4-enuronosyl groups at their non-reducing ends.. Functionally, pectinolytic enzymes consist of four classes of enzymes: pectin lyase, polygalacturonase, pectin methylesterase and rhamnogalacturonase. Among pectinolytic enzymes, pectin lyase is the most important in depolymerization of pectin, since it cleaves internal glycosidic bonds of highly methylated pectins. The sequence is that of Probable pectin lyase C (pelC) from Aspergillus niger (strain ATCC MYA-4892 / CBS 513.88 / FGSC A1513).